Consider the following 577-residue polypeptide: Arginine--tRNA ligase (577 aa).

The short motif at 122–132 is the 'HIGH' region element; that stretch reads PNVAKEMHVGH.

It belongs to the class-I aminoacyl-tRNA synthetase family. As to quaternary structure, monomer.

The protein localises to the cytoplasm. The enzyme catalyses tRNA(Arg) + L-arginine + ATP = L-arginyl-tRNA(Arg) + AMP + diphosphate. This Histophilus somni (strain 2336) (Haemophilus somnus) protein is Arginine--tRNA ligase.